The primary structure comprises 244 residues: Phosphoadenosine 5'-phosphosulfate reductase (244 aa).

Cys-239 acts as the Nucleophile; cysteine thiosulfonate intermediate in catalysis.

The protein belongs to the PAPS reductase family. CysH subfamily.

It is found in the cytoplasm. It carries out the reaction [thioredoxin]-disulfide + sulfite + adenosine 3',5'-bisphosphate + 2 H(+) = [thioredoxin]-dithiol + 3'-phosphoadenylyl sulfate. It functions in the pathway sulfur metabolism; hydrogen sulfide biosynthesis; sulfite from sulfate: step 3/3. Catalyzes the formation of sulfite from phosphoadenosine 5'-phosphosulfate (PAPS) using thioredoxin as an electron donor. The polypeptide is Phosphoadenosine 5'-phosphosulfate reductase (Escherichia coli O8 (strain IAI1)).